The chain runs to 1639 residues: MRPPDDQINNNVGSNSHLEKLKEAMDHQLQKSSKIVGSFTNSQNSSVGSVHSPILESPTSLNRQHRNSFSFNNVSSPSLEDERLINFPRVNPNRLMTSKRPNELFKTSSMSSDCYSPQKSRESLNSLCHSPAPSVSSCGNALNNDNTSASHSLTDEQPFETDSSANLFKQLQEKRNRTIGNVYEMACLLVFKTGLMNFWKNIIDFFAQQFFSTQISVVEPRDLSDIYNTPWQLRCYYDGGSHYDPYSNPISVNDNLASSSYVTVVASDGSKGIIYKDPASLKHEGDLLIDSKVVQTVLERATLLVYTRKQQHIVKNTKVHDNDYFSSIPNVDDIRSIKNSWKVFHDEKLNELKKQVEISASAAQLNGLYPQKKRAFVSHFSQNRKPYSQSDISKAQSSSFSEEPSNIYDEYEQNLLSPWSRSPVASPSIQTDPNRNPFFQNCLQESSFATESSTEKSASESVSETAVNDDCKGMNFSGNRRQEDHLNDFTSFPTETAVSIVHVPLMFPCSDQTSSRGRAPIAILSFKSNLVPYPENLIASIERLIPFIFSSYSNSQSVPLLPCPTQRHLLFNTSSTDNTKELSMSASSENSDCPHKEGECVGSFCNINAKGSSLNNIPKLPRFVPVPSEFFKKNQRSWVTLKKHRLLARLKSRISKKNSKVNENLRFSLNDGENYSNETITLKKDEIVLDKSKSYACCTSESHKYVQGHCGGQAPPFPLLKVIIDSIPVHVFTADPGSGKLTWVNRKTLLYCGLNMNEQIELQFSRIHPDDLPNFLNDWKSSLFSGSGFYHEIRLQRFDNVYRYFICRAVPLRDCTGSVLHFFGTMTDVHDQKLAERELQKQSAIAANENSYRSLAEASPQIVFAANGKNGIIYANAQWLSYSGLSLESSLGLGFLSAVYHADRKKCLLPESLEGTFNNQDESNGTKTFAAEIRFRSTDGHYRWHLVKSVCVNNSADTSTNLWLGTCTDIHDHKMLEEKLQESNIEAQRIVRSKMQYLSNMSHEIRTPLIGITGMVSFLLETQMSAEQLSYARIIQQSAKSLLTVINDILDLSKVRAGMMKLTSQRFSVRAMMEDANETLGTLAFSKGIELNYTVDIDVPDIVFGDNMRMRQVALNVIGNAIKFTNVGEVFTRCSVEKIDYSTNTVVLKWECIDTGQGFNRDDQLQMFKPFSQVESSTLPRHGGSGLGLVISKELVELHNGSMSCQSRRGVGTRFMWTATFTMDKTPLKFEPPDGCCPVCFCPYEKSKQSTEDYYCADDGNDKSATNFVKLAVNKADPGRESNRRKLESDKNVQSNKYVNPFASESEFCRCGASADPYTVLFWRLYRNKPSGIKLDKSALAVVVSHTKYSSEAIGNMLQSIIDISSFKDIVRYGNTYEAFEELLENPMQSKVTHIILNLPDIEAYVLFVKSLQLCSLYKDTKFILVTSTRQKESLSKIFSDSEDCNSESIHYVLKLVKPSKFFPLFYSDSEEKGKIGALNDMTRKAAMEQKADAETLRYNLAKSGFSVLLAEDNIINIKVISRYLERIGVKFKVTMDGLQCVEEWKREKPNFYSLILMDLQMPVMDGYQACNEIRKYELENDYPKVPIVALSANALPHVVLSCKDSGFDSYLAKPITLQHLSLIISGILNYTNQSKLHK.

Residues 38-49 show a composition bias toward polar residues; that stretch reads SFTNSQNSSVGS. The interval 38–76 is disordered; the sequence is SFTNSQNSSVGSVHSPILESPTSLNRQHRNSFSFNNVSS. The span at 67-76 shows a compositional bias: low complexity; that stretch reads NSFSFNNVSS. The PAS 1 domain maps to 716 to 786; the sequence is PFPLLKVIID…NDWKSSLFSG (71 aa). The PAC 1 domain occupies 789–841; sequence FYHEIRLQRFDNVYRYFICRAVPLRDCTGSVLHFFGTMTDVHDQKLAERELQK. The region spanning 848–920 is the PAS 2 domain; that stretch reads NENSYRSLAE…ESLEGTFNNQ (73 aa). The 54-residue stretch at 929–982 folds into the PAC 2 domain; that stretch reads FAAEIRFRSTDGHYRWHLVKSVCVNNSADTSTNLWLGTCTDIHDHKMLEEKLQE. Residues 1000-1223 form the Histidine kinase domain; it reads NMSHEIRTPL…RFMWTATFTM (224 aa). Residue His-1003 is modified to Phosphohistidine; by autocatalysis. In terms of domain architecture, Response regulatory spans 1507–1629; it reads SVLLAEDNII…HLSLIISGIL (123 aa). Asp-1559 is modified (4-aspartylphosphate).

The protein resides in the cytoplasm. It carries out the reaction ATP + protein L-histidine = ADP + protein N-phospho-L-histidine.. In terms of biological role, involved in the control of the SAPK-dependent transcriptional response to peroxide stress. Also has a role in G2/M regulation. This chain is Peroxide stress-activated histidine kinase mak1 (mak1), found in Schizosaccharomyces pombe (strain 972 / ATCC 24843) (Fission yeast).